Reading from the N-terminus, the 338-residue chain is MTASLSAPAIGILAVGAYAPAAVITNAHYATRLDTSDDWITSRTGIRERRHAAPDESSSVLGIRATQDLAGRFPGALDGVNLVICATSSPDAMFPSTAALIAGGTGLRGAAAFDVSVACSGFLYALSVGYGMIRAGLAKKALIVGSEVMSGAVDQNDRNTAILFGDGAGCVVIGEVPQGYGFQSFVLGADSAGGPHLYLRGAALRLPEGTEMGPHLTQNGREVFKFAVRTLGDSAEQAMRQAGKTTADIDWLVPHQANIRIIEAACERFGLPIERAVTNLDRYGNTSAASIPLALAEAQAQGRFKDGDQLLLAGFGGGLSWGAAALKWWSGPTGKQSS.

Active-site residues include Cys-119 and His-255. Residues 256-260 (QANIR) form an ACP-binding region. Asn-285 is an active-site residue.

It belongs to the thiolase-like superfamily. FabH family. Homodimer.

The protein localises to the cytoplasm. It catalyses the reaction malonyl-[ACP] + acetyl-CoA + H(+) = 3-oxobutanoyl-[ACP] + CO2 + CoA. It participates in lipid metabolism; fatty acid biosynthesis. Functionally, catalyzes the condensation reaction of fatty acid synthesis by the addition to an acyl acceptor of two carbons from malonyl-ACP. Catalyzes the first condensation reaction which initiates fatty acid synthesis and may therefore play a role in governing the total rate of fatty acid production. Possesses both acetoacetyl-ACP synthase and acetyl transacylase activities. Its substrate specificity determines the biosynthesis of branched-chain and/or straight-chain of fatty acids. The chain is Beta-ketoacyl-[acyl-carrier-protein] synthase III 2 from Deinococcus radiodurans (strain ATCC 13939 / DSM 20539 / JCM 16871 / CCUG 27074 / LMG 4051 / NBRC 15346 / NCIMB 9279 / VKM B-1422 / R1).